Consider the following 1182-residue polypeptide: Lysine-specific demethylase hairless (1182 aa).

Disordered regions lie at residues 227–257, 302–380, 411–443, and 507–546; these read LGLA…GAGR, YQLG…KKTW, AGSP…ARAW, and TGHS…ASLN. The segment covering 307-321 has biased composition (pro residues); it reads PATPRCPSPGPPTPP. The LXXLL motif 1 signature appears at 561–565; it reads LCRLL. Residues 595–620 form a C6-type zinc finger; the sequence is CSRCHHGLFNTHWRCSHCSHRLCVAC. The tract at residues 697-746 is disordered; it reads GDGGQQKEPTEKTPPTPQPSCNGDSNRTKDIKEETPDSTESPAEDGAGRS. Basic and acidic residues predominate over residues 722 to 731; the sequence is NRTKDIKEET. Residues 753-757 carry the LXXLL motif 2 motif; sequence LCELL. In terms of domain architecture, JmjC spans 939–1150; sequence DASRVQNLAS…LSAQLYHQGA (212 aa). Cys-1000, Glu-1002, and His-1118 together coordinate Fe cation.

It depends on Fe(2+) as a cofactor. As to expression, expressed predominantly in brain, hair follicles and interfollicular epidermis. No expression in dermis.

The protein localises to the nucleus. The enzyme catalyses N(6),N(6)-dimethyl-L-lysyl(9)-[histone H3] + 2 2-oxoglutarate + 2 O2 = L-lysyl(9)-[histone H3] + 2 formaldehyde + 2 succinate + 2 CO2. In terms of biological role, histone demethylase that specifically demethylates both mono- and dimethylated 'Lys-9' of histone H3. May act as a transcription regulator controlling hair biology (via targeting of collagens), neural activity, and cell cycle. The sequence is that of Lysine-specific demethylase hairless (Hr) from Mus musculus (Mouse).